Reading from the N-terminus, the 1026-residue chain is Adenylate-forming reductase 06235 (1026 aa).

The segment at 37–422 (FEFHAKANPD…LGRIDNQVKI (386 aa)) is adenylation (A) domain. AMP-binding positions include 332–333 (VT) and 412–415 (HLGR). Positions 556–638 (SLVSTVGSTV…ALFIWILVTK (83 aa)) are thiolation and peptide carrier (T) domain. The tract at residues 682 to 901 (CIRRVCARIY…PPTKMWVKGV (220 aa)) is reductase (R) domain. NADP(+)-binding positions include 685–688 (RVCA), 769–771 (TAL), and Tyr840.

Belongs to the adenylate-forming reductase family.

Its function is as follows. Adenylate-forming reductase, a natural product biosynthesis enzyme that resembles non-ribosomal peptide synthetases, yet serves to modify one substrate, rather than to condense two or more building blocks. The A-domain preferentially accepts L-serine, L-alanine and L-valine as substrates. The natural product of the enzyme is not yet known. The sequence is that of Adenylate-forming reductase 06235 from Coprinopsis cinerea (strain Okayama-7 / 130 / ATCC MYA-4618 / FGSC 9003) (Inky cap fungus).